A 426-amino-acid polypeptide reads, in one-letter code: Glutamate-1-semialdehyde 2,1-aminomutase (426 aa).

At lysine 265 the chain carries N6-(pyridoxal phosphate)lysine.

This sequence belongs to the class-III pyridoxal-phosphate-dependent aminotransferase family. HemL subfamily. As to quaternary structure, homodimer. Requires pyridoxal 5'-phosphate as cofactor.

The protein resides in the cytoplasm. The catalysed reaction is (S)-4-amino-5-oxopentanoate = 5-aminolevulinate. It participates in porphyrin-containing compound metabolism; protoporphyrin-IX biosynthesis; 5-aminolevulinate from L-glutamyl-tRNA(Glu): step 2/2. The sequence is that of Glutamate-1-semialdehyde 2,1-aminomutase from Hydrogenovibrio crunogenus (strain DSM 25203 / XCL-2) (Thiomicrospira crunogena).